The primary structure comprises 706 residues: Catalase HPII (706 aa).

Catalysis depends on residues histidine 77 and asparagine 151. Heme is bound at residue tyrosine 365. Positions 512–532 are disordered; the sequence is EPPEEQVDESAPVSPALSQVT.

It belongs to the catalase family. HPII subfamily. Heme serves as cofactor.

Its subcellular location is the cytoplasm. The catalysed reaction is 2 H2O2 = O2 + 2 H2O. Its function is as follows. Decomposes hydrogen peroxide into water and oxygen; serves to protect cells from the toxic effects of hydrogen peroxide. The sequence is that of Catalase HPII (katE) from Mycobacterium avium.